Here is a 59-residue protein sequence, read N- to C-terminus: Early protein GP1A (59 aa).

The polypeptide is Early protein GP1A (1A) (Bacillus phage PZA (Bacteriophage PZA)).